The chain runs to 388 residues: Deoxyuridine 5'-triphosphate nucleotidohydrolase (388 aa).

The segment covering 77–88 has biased composition (basic and acidic residues); the sequence is EEKYDKEQHPGE. Disordered regions lie at residues 77-96 and 336-388; these read EEKY…SPLP and THTP…PRHP. Residues 351–363 show a composition bias toward acidic residues; sequence VDDDVDETEEDEK.

The protein belongs to the dUTPase family. It depends on Mg(2+) as a cofactor.

The enzyme catalyses dUTP + H2O = dUMP + diphosphate + H(+). It participates in pyrimidine metabolism; dUMP biosynthesis; dUMP from dCTP (dUTP route): step 2/2. Functionally, involved in nucleotide metabolism: produces dUMP, the immediate precursor of thymidine nucleotides and decreases the intracellular concentration of dUTP to avoid uracil incorporation into viral DNA. This is Deoxyuridine 5'-triphosphate nucleotidohydrolase from Homo sapiens (Human).